The following is a 51-amino-acid chain: Photosystem I reaction center subunit IX (51 aa).

Residues 17-37 (FFSTAPVIALVFFTLTAGFLV) traverse the membrane as a helical segment.

This sequence belongs to the PsaJ family.

Its subcellular location is the cellular thylakoid membrane. Functionally, may help in the organization of the PsaE and PsaF subunits. This is Photosystem I reaction center subunit IX from Acaryochloris marina (strain MBIC 11017).